A 392-amino-acid polypeptide reads, in one-letter code: MDLFGDLPEPERSPRPAAGKEAQKGPLLFDDLPPASSTDSGSGGPLLFDDLPPASSGDSGSLATSISQMVKTEGKGAKRKTSEEEKNGSEELVEKKVCKASSVIFGLKGYVAERKGEREEMQDAHVILNDITEECRPPSSLITRVSYFAVFDGHGGIRASKFAAQNLHQNLIRKFPKGDVISVEKTVKRCLLDTFKHTDEEFLKQASSQKPAWKDGSTATCVLAVDNILYIANLGDSRAILCRYNEESQKHAALSLSKEHNPTQYEERMRIQKAGGNVRDGRVLGVLEVSRSIGDGQYKRCGVTSVPDIRRCQLTPNDRFILLACDGLFKVFTPEEAVNFILSCLEDEKIQTREGKSAADARYEAACNRLANKAVQRGSADNVTVMVVRIGH.

Residue Met-1 is modified to N-acetylmethionine. A disordered region spans residues 1 to 90 (MDLFGDLPEP…TSEEEKNGSE (90 aa)). Ser-13 carries the post-translational modification Phosphoserine. Over residues 56–70 (SGDSGSLATSISQMV) the composition is skewed to polar residues. Basic and acidic residues predominate over residues 72-90 (TEGKGAKRKTSEEEKNGSE). One can recognise a PPM-type phosphatase domain in the interval 108 to 390 (KGYVAERKGE…DNVTVMVVRI (283 aa)). Residues Asp-152 and Gly-153 each coordinate Mn(2+). Lys-210 is modified (N6-acetyllysine). The Mn(2+) site is built by Asp-326 and Asp-381.

The protein belongs to the PP2C family. Interacts with ILK. Specific association with ILK is independent of the catalytic activity of either partner. Mg(2+) serves as cofactor. It depends on Mn(2+) as a cofactor. In terms of tissue distribution, widely expressed. Highest levels expressed in striated muscle. Much lower levels evident in various smooth muscle tissues.

The protein localises to the cytoplasm. The catalysed reaction is O-phospho-L-seryl-[protein] + H2O = L-seryl-[protein] + phosphate. It carries out the reaction O-phospho-L-threonyl-[protein] + H2O = L-threonyl-[protein] + phosphate. With respect to regulation, inhibited rather than stimulated by magnesium. Protein phosphatase that may play a role in regulation of cell cycle progression via dephosphorylation of its substrates whose appropriate phosphorylation states might be crucial for cell proliferation. Selectively associates with integrin linked kinase (ILK), to modulate cell adhesion and growth factor signaling. Inhibits the ILK-GSK3B signaling axis and may play an important role in inhibiting oncogenic transformation. This Homo sapiens (Human) protein is Integrin-linked kinase-associated serine/threonine phosphatase 2C (ILKAP).